The sequence spans 328 residues: Malate dehydrogenase (328 aa).

11–17 (GAAGQIG) serves as a coordination point for NAD(+). The substrate site is built by R94 and R100. NAD(+) contacts are provided by residues N107, Q114, and 131–133 (VGN). N133 and R164 together coordinate substrate. H189 serves as the catalytic Proton acceptor.

It belongs to the LDH/MDH superfamily. MDH type 2 family.

The enzyme catalyses (S)-malate + NAD(+) = oxaloacetate + NADH + H(+). Catalyzes the reversible oxidation of malate to oxaloacetate. This Acinetobacter baumannii (strain SDF) protein is Malate dehydrogenase.